We begin with the raw amino-acid sequence, 246 residues long: Cell division protein ZapD (246 aa).

The protein belongs to the ZapD family. Interacts with FtsZ.

It is found in the cytoplasm. Cell division factor that enhances FtsZ-ring assembly. Directly interacts with FtsZ and promotes bundling of FtsZ protofilaments, with a reduction in FtsZ GTPase activity. This is Cell division protein ZapD from Vibrio atlanticus (strain LGP32) (Vibrio splendidus (strain Mel32)).